Consider the following 407-residue polypeptide: Phosphopentomutase (407 aa).

Residues D10, D306, H311, D347, H348, and H359 each coordinate Mn(2+).

The protein belongs to the phosphopentomutase family. Mn(2+) is required as a cofactor.

It is found in the cytoplasm. The enzyme catalyses 2-deoxy-alpha-D-ribose 1-phosphate = 2-deoxy-D-ribose 5-phosphate. It catalyses the reaction alpha-D-ribose 1-phosphate = D-ribose 5-phosphate. Its pathway is carbohydrate degradation; 2-deoxy-D-ribose 1-phosphate degradation; D-glyceraldehyde 3-phosphate and acetaldehyde from 2-deoxy-alpha-D-ribose 1-phosphate: step 1/2. Its function is as follows. Isomerase that catalyzes the conversion of deoxy-ribose 1-phosphate (dRib-1-P) and ribose 1-phosphate (Rib-1-P) to deoxy-ribose 5-phosphate (dRib-5-P) and ribose 5-phosphate (Rib-5-P), respectively. In Erwinia tasmaniensis (strain DSM 17950 / CFBP 7177 / CIP 109463 / NCPPB 4357 / Et1/99), this protein is Phosphopentomutase.